The following is a 334-amino-acid chain: Glyceraldehyde-3-phosphate dehydrogenase B (334 aa).

Residues Arg-12 to Ile-13, Asp-34, and Ser-121 contribute to the NAD(+) site. D-glyceraldehyde 3-phosphate contacts are provided by residues Ser-149–Thr-151, Thr-180, Thr-209–Gly-210, and Arg-232. The active-site Nucleophile is Cys-150. Residue Asn-314 coordinates NAD(+).

The protein belongs to the glyceraldehyde-3-phosphate dehydrogenase family. In terms of assembly, homotetramer.

The enzyme catalyses D-glyceraldehyde 3-phosphate + phosphate + NAD(+) = (2R)-3-phospho-glyceroyl phosphate + NADH + H(+). The protein operates within carbohydrate degradation; glycolysis; pyruvate from D-glyceraldehyde 3-phosphate: step 1/5. In terms of biological role, glyceraldehyde-3-phosphate dehydrogenase; part of the gene cluster that mediates the biosynthesis of heptelidic acid (HA), a sesquiterpene lactone that acts as an inhibitor of glyceraldehyde-3-phosphatedehydrogenase (GAPDH) and a growth inhibitor of the salt-tolerant lactic acid bacteria in soy sauce brewing. The GAPDPH hepG/gdpB shows much higher resistance to HA than the GAPDH gpdA located outside of the cluster, but it does not seem to act in self-resistance. This chain is Glyceraldehyde-3-phosphate dehydrogenase B, found in Aspergillus oryzae (strain ATCC 42149 / RIB 40) (Yellow koji mold).